The sequence spans 60 residues: Large ribosomal subunit protein uL30 (60 aa).

This sequence belongs to the universal ribosomal protein uL30 family. Part of the 50S ribosomal subunit.

The protein is Large ribosomal subunit protein uL30 of Mycobacteroides abscessus (strain ATCC 19977 / DSM 44196 / CCUG 20993 / CIP 104536 / JCM 13569 / NCTC 13031 / TMC 1543 / L948) (Mycobacterium abscessus).